The primary structure comprises 156 residues: Non-structural protein 2 (156 aa).

Belongs to the pneumovirus non-structural protein 2 family.

The protein resides in the host cytoplasm. Its function is as follows. Plays a major role in antagonizing the type I IFN-mediated antiviral response. May also inhibit viral transcription and RNA replication. In Mus musculus (Mouse), this protein is Non-structural protein 2 (1B).